We begin with the raw amino-acid sequence, 211 residues long: Putative F-box protein At1g52490 (211 aa).

In terms of domain architecture, F-box spans 12 to 59; the sequence is EEEYLQLPLDLIVEILKKLPLKSLVRFRCVSKQFSTIICSLRDFIESV.

This chain is Putative F-box protein At1g52490, found in Arabidopsis thaliana (Mouse-ear cress).